The sequence spans 161 residues: Putative pre-16S rRNA nuclease (161 aa).

A disordered region spans residues 141-161; it reads AAGSPPGALVPRNRVDPDRHA.

It belongs to the YqgF nuclease family.

It localises to the cytoplasm. Functionally, could be a nuclease involved in processing of the 5'-end of pre-16S rRNA. In Clavibacter michiganensis subsp. michiganensis (strain NCPPB 382), this protein is Putative pre-16S rRNA nuclease.